Here is an 81-residue protein sequence, read N- to C-terminus: ATP synthase subunit c, chloroplastic (81 aa).

The next 2 membrane-spanning stretches (helical) occupy residues 3-23 (PLIA…ASIG) and 57-77 (LAFM…LLFA).

The protein belongs to the ATPase C chain family. F-type ATPases have 2 components, F(1) - the catalytic core - and F(0) - the membrane proton channel. F(1) has five subunits: alpha(3), beta(3), gamma(1), delta(1), epsilon(1). F(0) has four main subunits: a(1), b(1), b'(1) and c(10-14). The alpha and beta chains form an alternating ring which encloses part of the gamma chain. F(1) is attached to F(0) by a central stalk formed by the gamma and epsilon chains, while a peripheral stalk is formed by the delta, b and b' chains.

The protein resides in the plastid. Its subcellular location is the chloroplast thylakoid membrane. Its function is as follows. F(1)F(0) ATP synthase produces ATP from ADP in the presence of a proton or sodium gradient. F-type ATPases consist of two structural domains, F(1) containing the extramembraneous catalytic core and F(0) containing the membrane proton channel, linked together by a central stalk and a peripheral stalk. During catalysis, ATP synthesis in the catalytic domain of F(1) is coupled via a rotary mechanism of the central stalk subunits to proton translocation. In terms of biological role, key component of the F(0) channel; it plays a direct role in translocation across the membrane. A homomeric c-ring of between 10-14 subunits forms the central stalk rotor element with the F(1) delta and epsilon subunits. This chain is ATP synthase subunit c, chloroplastic, found in Chaetosphaeridium globosum (Charophycean green alga).